We begin with the raw amino-acid sequence, 355 residues long: DNA polymerase IV (355 aa).

The 182-residue stretch at 7 to 188 folds into the UmuC domain; sequence IIHIDMDCFY…LPVRKLFGVG (182 aa). Positions 11 and 106 each coordinate Mg(2+). The active site involves E107.

The protein belongs to the DNA polymerase type-Y family. As to quaternary structure, monomer. The cofactor is Mg(2+).

It localises to the cytoplasm. It carries out the reaction DNA(n) + a 2'-deoxyribonucleoside 5'-triphosphate = DNA(n+1) + diphosphate. Its function is as follows. Poorly processive, error-prone DNA polymerase involved in untargeted mutagenesis. Copies undamaged DNA at stalled replication forks, which arise in vivo from mismatched or misaligned primer ends. These misaligned primers can be extended by PolIV. Exhibits no 3'-5' exonuclease (proofreading) activity. May be involved in translesional synthesis, in conjunction with the beta clamp from PolIII. In Legionella pneumophila (strain Lens), this protein is DNA polymerase IV.